A 340-amino-acid polypeptide reads, in one-letter code: DNA-directed RNA polymerase subunit alpha (340 aa).

The interval 1-226 (MLIAQRPSLT…ELFGLARELN (226 aa)) is alpha N-terminal domain (alpha-NTD). The alpha C-terminal domain (alpha-CTD) stretch occupies residues 243–340 (LAADLALPIE…DAGFVETEQY (98 aa)).

It belongs to the RNA polymerase alpha chain family. Homodimer. The RNAP catalytic core consists of 2 alpha, 1 beta, 1 beta' and 1 omega subunit. When a sigma factor is associated with the core the holoenzyme is formed, which can initiate transcription. The last 19 amino acids in the C-terminal part are cleaved in the spore.

It catalyses the reaction RNA(n) + a ribonucleoside 5'-triphosphate = RNA(n+1) + diphosphate. In terms of biological role, DNA-dependent RNA polymerase catalyzes the transcription of DNA into RNA using the four ribonucleoside triphosphates as substrates. This chain is DNA-directed RNA polymerase subunit alpha, found in Streptomyces granaticolor.